The following is a 237-amino-acid chain: Ribitol-5-phosphate cytidylyltransferase (237 aa).

Residues 7 to 10 (LAGG) and 80 to 86 (GEDRNET) each bind CTP.

It belongs to the IspD/TarI cytidylyltransferase family. TarI subfamily.

It carries out the reaction D-ribitol 5-phosphate + CTP + H(+) = CDP-L-ribitol + diphosphate. It functions in the pathway cell wall biogenesis; poly(ribitol phosphate) teichoic acid biosynthesis. Its function is as follows. Catalyzes the transfer of the cytidylyl group of CTP to D-ribitol 5-phosphate. This is Ribitol-5-phosphate cytidylyltransferase from Listeria monocytogenes serotype 4b (strain F2365).